Here is an 876-residue protein sequence, read N- to C-terminus: MKYFTSEEIRENFLYFFEKKGHKKLPSSSLIPNDPQLLFTVAGMVPFKPIFWGKVEPTYTRITTCQKCLRTNDIENVGRTPRHHTFFEMLGNFSFGDYFKKEAIKWAWEFLTEELGLPAEKLWASVYETDDEAFNIWKDDIKIPENKILRFGKEENWWGPAGQTGPCGPCSEIYFDTGYTENCPDQENCTPACDCGRFVEIWNIVFTEYYSDENGNLSPLPRKNIDTGAGFERICAVTQGKYDNFDSDLFKEIIEEIQRIFGVKFRVNKSKDVSIKVIADHSRAIAFLISEGIIPSNEGRGYVLRRLIRRAVRHGALLEAKGPFLSSILETVIKKMGKIYPELIEKEALIKDISFMEEEKFFETMEKGMERLNNIIQNLNNETTLPGKIAFELYDTYGFPLDLTKEILSEKGIEVDEKEFTELMNKQREMARSASGKVEYDTEKQIYKEIDKFLTPTEFIGYDKLSSTEEVQLIIKGNSIVPQAQEGDEIELFFPKTPFYAERGGQVSDKGVIYNETFEAEVIHVKPIRNEIISHLVKIKKGSIKNGERVFLKVDEKKRKATEKNHTATHLLHSALRKVIGEHIRQAGSYVAPERLRFDFTHYEPLTQDQIKQIEYLINEQIQKAIPVNIYLKSLEEAKSMDVIALFEEKYGEVVRIVEIDDFSRELCGGTHVSNTGEIGLFKILEESSISSGVRRIEAITGFESLNYATELESIMTNLSKMLDSSRDQIPDKIEGILKTIKNQEKEIKQLQFQLATKNIERLAETPQIIEGEKVVVAQLENLEKDVHANTADILLQKLGRGVVILFNKSNNEQVSLVVKVSKDTSKKFHAGNIARKIASYLGGGGGGGPTFAQAGGKYANKVKEVIEHINDFMEV.

Zn(2+) contacts are provided by H566, H570, C668, and H672.

The protein belongs to the class-II aminoacyl-tRNA synthetase family. The cofactor is Zn(2+).

It is found in the cytoplasm. It carries out the reaction tRNA(Ala) + L-alanine + ATP = L-alanyl-tRNA(Ala) + AMP + diphosphate. Catalyzes the attachment of alanine to tRNA(Ala) in a two-step reaction: alanine is first activated by ATP to form Ala-AMP and then transferred to the acceptor end of tRNA(Ala). Also edits incorrectly charged Ser-tRNA(Ala) and Gly-tRNA(Ala) via its editing domain. This is Alanine--tRNA ligase from Petrotoga mobilis (strain DSM 10674 / SJ95).